The chain runs to 327 residues: tRNA N6-adenosine threonylcarbamoyltransferase (327 aa).

Fe cation contacts are provided by His-109 and His-113. Substrate is bound by residues 132 to 136, Asp-165, Gly-178, Asp-182, and Asn-268; that span reads MVSGG. Position 296 (Asp-296) interacts with Fe cation.

This sequence belongs to the KAE1 / TsaD family. As to quaternary structure, forms a hexamer composed of two TsaB, TsaD and TsaE trimers. It depends on Fe(2+) as a cofactor.

The protein localises to the cytoplasm. The enzyme catalyses L-threonylcarbamoyladenylate + adenosine(37) in tRNA = N(6)-L-threonylcarbamoyladenosine(37) in tRNA + AMP + H(+). Its function is as follows. Required for the formation of a threonylcarbamoyl group on adenosine at position 37 (t(6)A37) in tRNAs that read codons beginning with adenine. Is involved in the transfer of the threonylcarbamoyl moiety of threonylcarbamoyl-AMP (TC-AMP) to the N6 group of A37, together with TsaE and TsaB. TsaD likely plays a direct catalytic role in this reaction. The polypeptide is tRNA N6-adenosine threonylcarbamoyltransferase (Thermotoga maritima (strain ATCC 43589 / DSM 3109 / JCM 10099 / NBRC 100826 / MSB8)).